We begin with the raw amino-acid sequence, 345 residues long: DNA-directed RNA polymerase subunit alpha (345 aa).

An alpha N-terminal domain (alpha-NTD) region spans residues 1–241 (MLRDTHLALQ…DQLGMFINFE (241 aa)). The alpha C-terminal domain (alpha-CTD) stretch occupies residues 257-345 (FNPNLLRKVD…ELVKRSDNPF (89 aa)).

Belongs to the RNA polymerase alpha chain family. As to quaternary structure, homodimer. The RNAP catalytic core consists of 2 alpha, 1 beta, 1 beta' and 1 omega subunit. When a sigma factor is associated with the core the holoenzyme is formed, which can initiate transcription.

The catalysed reaction is RNA(n) + a ribonucleoside 5'-triphosphate = RNA(n+1) + diphosphate. Functionally, DNA-dependent RNA polymerase catalyzes the transcription of DNA into RNA using the four ribonucleoside triphosphates as substrates. The sequence is that of DNA-directed RNA polymerase subunit alpha from Acidiphilium cryptum (strain JF-5).